The chain runs to 935 residues: Progesterone receptor (935 aa).

The tract at residues 1-164 is AF3; mediates transcriptional activation; the sequence is MTELKAKGPR…PATQGVLSPL (164 aa). The disordered stretch occupies residues 1-254; that stretch reads MTELKAKGPR…GGAAAGGGAA (254 aa). The interval 1–568 is modulating, Pro-Rich; that stretch reads MTELKAKGPR…YSFESLPQKI (568 aa). Phosphoserine is present on S20. Residues 55 to 59 carry the LXXL motif 1 motif; that stretch reads LDGLL. S81 carries the post-translational modification Phosphoserine. The short motif at 115–119 is the LXXL motif 2 element; the sequence is LDTLL. S130 and S162 each carry phosphoserine. The tract at residues 165–305 is mediates transcriptional transrepression; the sequence is MSRSGGKAGD…LATTVMDFIH (141 aa). The Nuclear localization signal signature appears at 183–187; sequence KVLPR. 2 positions are modified to phosphoserine: S190 and S213. The segment covering 220 to 231 has biased composition (acidic residues); that stretch reads EVEEEDGSESED. Low complexity predominate over residues 232–246; the sequence is SAGPLLKGKPRALGG. S294 is subject to Phosphoserine; by MAPK1. The interval 331 to 378 is disordered; that stretch reads GGAGAASAFAPPRSSPSASSTPVAVGDFPDCAYPPDAEPKDDAYPLYS. Over residues 335–350 the composition is skewed to low complexity; it reads AASAFAPPRSSPSASS. Position 345 is a phosphoserine; by MAPK (S345). Residue K388 forms a Glycyl lysine isopeptide (Lys-Gly) (interchain with G-Cter in SUMO); alternate linkage. Residue K388 forms a Glycyl lysine isopeptide (Lys-Gly) (interchain with G-Cter in ubiquitin); alternate linkage. S400 bears the Phosphoserine; by CDK2 mark. A compositionally biased stretch (pro residues) spans 418-430; it reads PLGPPPPLPPRAP. A disordered region spans residues 418–438; sequence PLGPPPPLPPRAPPTRAGEAA. Positions 456 to 548 are AF1; mediates transcriptional activation; that stretch reads STLECILYKA…VYPPYLNYLR (93 aa). A Glycyl lysine isopeptide (Lys-Gly) (interchain with G-Cter in SUMO) cross-link involves residue K533. 2 consecutive NR C4-type zinc fingers follow at residues 569 to 589 and 605 to 629; these read CLICGDEASGCHYGVLTCGSC and CAGRNDCIVDKIRRKNCPACRLRKC. A DNA-binding region (nuclear receptor) is located at residues 569–641; sequence CLICGDEASG…AGMVLGGRKF (73 aa). S678 is subject to Phosphoserine. The region spanning 681 to 915 is the NR LBD domain; that stretch reads QDIQLIPPLI…EFPEMMSEVI (235 aa). The AF2; mediates transcriptional activation stretch occupies residues 689–935; sequence LINLLMSIEP…MVKPLLFHKK (247 aa).

This sequence belongs to the nuclear hormone receptor family. As to quaternary structure, interacts with SMARD1 and UNC45A. Interacts with CUEDC2; the interaction promotes ubiquitination, decreases sumoylation, and represses transcriptional activity. Interacts with PIAS3; the interaction promotes sumoylation of PR in a hormone-dependent manner, inhibits DNA-binding, and alters nuclear export. Interacts with SP1; the interaction requires ligand-induced phosphorylation on Ser-345 by ERK1/2-MAPK. Interacts with PRMT2. Interacts with NCOA2 and NCOA1. Interacts with KLF9. Interacts with GTF2B. Phosphorylated on multiple serine sites. Several of these sites are hormone-dependent. Phosphorylation on Ser-294 is highly hormone-dependent and modulates ubiquitination and sumoylation on Lys-388. Phosphorylation on Ser-102 and Ser-345 also requires induction by hormone. Basal phosphorylation on Ser-81, Ser-162, Ser-190 and Ser-400 is increased in response to progesterone and can be phosphorylated in vitro by the CDK2-A1 complex. Increased levels of phosphorylation on Ser-400 also in the presence of EGF, heregulin, IGF, PMA and FBS. Phosphorylation at this site by CDK2 is ligand-independent, and increases nuclear translocation and transcriptional activity. Phosphorylation at Ser-162 and Ser-294, but not at Ser-190, is impaired during the G(2)/M phase of the cell cycle. Phosphorylation on Ser-345 by ERK1/2 MAPK is required for interaction with SP1. Post-translationally, sumoylation is hormone-dependent and represses transcriptional activity. Sumoylation on all three sites is enhanced by PIAS3. Desumoylated by SENP1. Sumoylation on Lys-388, the main site of sumoylation, is repressed by ubiquitination on the same site, and modulated by phosphorylation at Ser-294. In terms of processing, ubiquitination is hormone-dependent and represses sumoylation on the same site. Promoted by MAPK-mediated phosphorylation on Ser-294. Palmitoylated by ZDHHC7 and ZDHHC21. Palmitoylation is required for plasma membrane targeting and for rapid intracellular signaling via ERK and AKT kinases and cAMP generation.

It localises to the nucleus. It is found in the cytoplasm. Its function is as follows. The steroid hormones and their receptors are involved in the regulation of eukaryotic gene expression and affect cellular proliferation and differentiation in target tissues. Transcriptional activator of several progesteron-dependent promoters in a variety of cell types. Involved in activation of SRC-dependent MAPK signaling on hormone stimulation. The protein is Progesterone receptor (PGR) of Pongo pygmaeus (Bornean orangutan).